The following is a 300-amino-acid chain: Urease accessory protein UreD (300 aa).

This sequence belongs to the UreD family. In terms of assembly, ureD, UreF and UreG form a complex that acts as a GTP-hydrolysis-dependent molecular chaperone, activating the urease apoprotein by helping to assemble the nickel containing metallocenter of UreC. The UreE protein probably delivers the nickel.

The protein localises to the cytoplasm. Required for maturation of urease via the functional incorporation of the urease nickel metallocenter. This is Urease accessory protein UreD from Prochlorococcus marinus (strain MIT 9215).